The sequence spans 159 residues: Ribosomal RNA large subunit methyltransferase H (159 aa).

S-adenosyl-L-methionine-binding positions include Leu-76, Gly-108, and 127–132 (FSKMTF).

It belongs to the RNA methyltransferase RlmH family. Homodimer.

It is found in the cytoplasm. It catalyses the reaction pseudouridine(1915) in 23S rRNA + S-adenosyl-L-methionine = N(3)-methylpseudouridine(1915) in 23S rRNA + S-adenosyl-L-homocysteine + H(+). Specifically methylates the pseudouridine at position 1915 (m3Psi1915) in 23S rRNA. The chain is Ribosomal RNA large subunit methyltransferase H from Staphylococcus saprophyticus subsp. saprophyticus (strain ATCC 15305 / DSM 20229 / NCIMB 8711 / NCTC 7292 / S-41).